The chain runs to 236 residues: Pyridoxine 5'-phosphate synthase (236 aa).

Asparagine 6 is a 3-amino-2-oxopropyl phosphate binding site. A 1-deoxy-D-xylulose 5-phosphate-binding site is contributed by 8–9 (DH). Arginine 17 provides a ligand contact to 3-amino-2-oxopropyl phosphate. Histidine 42 acts as the Proton acceptor in catalysis. 1-deoxy-D-xylulose 5-phosphate contacts are provided by arginine 44 and histidine 49. Catalysis depends on glutamate 69, which acts as the Proton acceptor. Residue threonine 99 participates in 1-deoxy-D-xylulose 5-phosphate binding. Residue histidine 190 is the Proton donor of the active site. Residues glycine 191 and 212 to 213 (GH) contribute to the 3-amino-2-oxopropyl phosphate site.

The protein belongs to the PNP synthase family. As to quaternary structure, homooctamer; tetramer of dimers.

The protein localises to the cytoplasm. It catalyses the reaction 3-amino-2-oxopropyl phosphate + 1-deoxy-D-xylulose 5-phosphate = pyridoxine 5'-phosphate + phosphate + 2 H2O + H(+). It participates in cofactor biosynthesis; pyridoxine 5'-phosphate biosynthesis; pyridoxine 5'-phosphate from D-erythrose 4-phosphate: step 5/5. Catalyzes the complicated ring closure reaction between the two acyclic compounds 1-deoxy-D-xylulose-5-phosphate (DXP) and 3-amino-2-oxopropyl phosphate (1-amino-acetone-3-phosphate or AAP) to form pyridoxine 5'-phosphate (PNP) and inorganic phosphate. The polypeptide is Pyridoxine 5'-phosphate synthase (Chloroherpeton thalassium (strain ATCC 35110 / GB-78)).